We begin with the raw amino-acid sequence, 154 residues long: MVLSEGEWQLVLHVWAKVEADVAGHGQDILIRLFKSHPETLEKFDRFKHLKTEAEMKASEDLKKHGVTVLTALGAILKKKGHHEAELKPLAQSHATKHKIPIKYLEFISEAIIHVLHSRHPGDFGADAQGAMNKALELFRKDIAAKYKELGYQG.

The 147-residue stretch at 2–148 (VLSEGEWQLV…FRKDIAAKYK (147 aa)) folds into the Globin domain. Ser-4 is modified (phosphoserine). His-65 is a binding site for nitrite. His-65 is an O2 binding site. The residue at position 68 (Thr-68) is a Phosphothreonine. Residue His-94 participates in heme b binding.

This sequence belongs to the globin family. As to quaternary structure, monomeric.

It localises to the cytoplasm. The protein localises to the sarcoplasm. It catalyses the reaction Fe(III)-heme b-[protein] + nitric oxide + H2O = Fe(II)-heme b-[protein] + nitrite + 2 H(+). The catalysed reaction is H2O2 + AH2 = A + 2 H2O. Its function is as follows. Monomeric heme protein which primary function is to store oxygen and facilitate its diffusion within muscle tissues. Reversibly binds oxygen through a pentacoordinated heme iron and enables its timely and efficient release as needed during periods of heightened demand. Depending on the oxidative conditions of tissues and cells, and in addition to its ability to bind oxygen, it also has a nitrite reductase activity whereby it regulates the production of bioactive nitric oxide. Under stress conditions, like hypoxia and anoxia, it also protects cells against reactive oxygen species thanks to its pseudoperoxidase activity. The chain is Myoglobin (MB) from Physeter macrocephalus (Sperm whale).